We begin with the raw amino-acid sequence, 557 residues long: Autophagy-related protein 17 (557 aa).

Disordered regions lie at residues 1-25 (MSSS…TEQQ) and 204-227 (ASSR…SMSS). Residues 205 to 227 (SSRSSSSPSSSSASNSSLPSMSS) are compositionally biased toward low complexity. 2 coiled-coil regions span residues 334–355 (DRIG…ALRS) and 428–458 (RHVR…AREA). The tract at residues 495–532 (AVSEQANDEEPTAGEREQRGGGQENHLSAVGDNTEVDE) is disordered.

Belongs to the ATG17 family.

It localises to the cytoplasm. Its subcellular location is the preautophagosomal structure membrane. In terms of biological role, autophagy-specific protein that functions in response to autophagy-inducing signals as a scaffold to recruit other ATG proteins to organize pre-autophagosomal structure (PAS) formation. Modulates the timing and magnitude of the autophagy response, such as the size of the sequestering vesicles. Plays particularly a role in pexophagy and nucleophagy. The chain is Autophagy-related protein 17 (atg17) from Aspergillus clavatus (strain ATCC 1007 / CBS 513.65 / DSM 816 / NCTC 3887 / NRRL 1 / QM 1276 / 107).